A 126-amino-acid polypeptide reads, in one-letter code: Large ribosomal subunit protein bL17 (126 aa).

Belongs to the bacterial ribosomal protein bL17 family. In terms of assembly, part of the 50S ribosomal subunit. Contacts protein L32.

The chain is Large ribosomal subunit protein bL17 from Vibrio parahaemolyticus serotype O3:K6 (strain RIMD 2210633).